Consider the following 143-residue polypeptide: Envelope protein A28 homolog (143 aa).

The helical; Signal-anchor for type II membrane protein transmembrane segment at 1 to 21 (MNTVQILVVILITTALSFLVF) threads the bilayer. Residues 22 to 143 (QLWYYAENYE…LLRLLMANTS (122 aa)) lie on the Virion surface side of the membrane.

This sequence belongs to the poxviridae A28 protein family. In terms of processing, contains two intramolecular disulfide bonds. They are created by the viral disulfide bond formation pathway, a poxvirus-specific pathway that operates on the cytoplasmic side of the MV membranes.

It is found in the virion membrane. In terms of biological role, envelope protein required for virus entry into host cell and for cell-cell fusion (syncytium formation). This Amsacta (AmEPV) protein is Envelope protein A28 homolog.